The chain runs to 361 residues: Probable dual-specificity RNA methyltransferase RlmN (361 aa).

Glu91 serves as the catalytic Proton acceptor. The Radical SAM core domain maps to 97–329 (QHYGLSVCVT…KKKGVNCVVR (233 aa)). The cysteines at positions 104 and 340 are disulfide-linked. 3 residues coordinate [4Fe-4S] cluster: Cys111, Cys115, and Cys118. Residues 163 to 164 (GE), Ser195, 218 to 220 (SLH), and Asn296 each bind S-adenosyl-L-methionine. Cys340 functions as the S-methylcysteine intermediate in the catalytic mechanism.

The protein belongs to the radical SAM superfamily. RlmN family. Requires [4Fe-4S] cluster as cofactor.

The protein localises to the cytoplasm. The catalysed reaction is adenosine(2503) in 23S rRNA + 2 reduced [2Fe-2S]-[ferredoxin] + 2 S-adenosyl-L-methionine = 2-methyladenosine(2503) in 23S rRNA + 5'-deoxyadenosine + L-methionine + 2 oxidized [2Fe-2S]-[ferredoxin] + S-adenosyl-L-homocysteine. It carries out the reaction adenosine(37) in tRNA + 2 reduced [2Fe-2S]-[ferredoxin] + 2 S-adenosyl-L-methionine = 2-methyladenosine(37) in tRNA + 5'-deoxyadenosine + L-methionine + 2 oxidized [2Fe-2S]-[ferredoxin] + S-adenosyl-L-homocysteine. Specifically methylates position 2 of adenine 2503 in 23S rRNA and position 2 of adenine 37 in tRNAs. This Streptococcus pneumoniae serotype 19F (strain G54) protein is Probable dual-specificity RNA methyltransferase RlmN.